The sequence spans 104 residues: Urease subunit beta (104 aa).

The protein belongs to the urease beta subunit family. Heterotrimer of UreA (gamma), UreB (beta) and UreC (alpha) subunits. Three heterotrimers associate to form the active enzyme.

The protein resides in the cytoplasm. It carries out the reaction urea + 2 H2O + H(+) = hydrogencarbonate + 2 NH4(+). It functions in the pathway nitrogen metabolism; urea degradation; CO(2) and NH(3) from urea (urease route): step 1/1. This is Urease subunit beta from Methylocella silvestris (strain DSM 15510 / CIP 108128 / LMG 27833 / NCIMB 13906 / BL2).